We begin with the raw amino-acid sequence, 182 residues long: Large ribosomal subunit protein uL22 (182 aa).

Positions 155 to 182 are disordered; sequence SGVDGAKQGKKKKKTDGVEKATTKRQKQ.

The protein belongs to the universal ribosomal protein uL22 family.

The sequence is that of Large ribosomal subunit protein uL22 (RpL17) from Carabus granulatus (Ground beetle).